Here is a 177-residue protein sequence, read N- to C-terminus: Neuroblastoma suppressor of tumorigenicity 1 (177 aa).

An N-terminal signal peptide occupies residues 1 to 16 (MLWFVVGALFPALLLA). 5 disulfides stabilise this stretch: C34/C84, C48/C98, C58/C117, C62/C119, and C81/C122. The 90-residue stretch at 34 to 123 (CEAKNITQIV…ILHCSCQACG (90 aa)) folds into the CTCK domain. The tract at residues 143-177 (MPAEGPGPHHYAHHQQEVEEPPASSHHHHEEEGDE) is disordered.

It belongs to the DAN family.

It is found in the secreted. Its function is as follows. May act as a tumor suppressor. The chain is Neuroblastoma suppressor of tumorigenicity 1 (NBL1) from Gallus gallus (Chicken).